Consider the following 1034-residue polypeptide: Ubiquitin-like-specific protease 2 (1034 aa).

6 disordered regions span residues methionine 1 to aspartate 42, isoleucine 71 to leucine 110, serine 388 to threonine 419, isoleucine 731 to histidine 800, glycine 841 to glycine 960, and serine 983 to proline 1034. Low complexity predominate over residues serine 19–proline 33. Residues serine 74–glutamate 85 show a composition bias toward acidic residues. Low complexity predominate over residues threonine 743–threonine 756. A Phosphoserine modification is found at serine 788. Polar residues-rich tracts occupy residues proline 845–histidine 856, glutamine 876–aspartate 904, and glycine 912–isoleucine 923. A Phosphoserine modification is found at serine 903. Residues serine 983 and serine 984 each carry the phosphoserine modification. Polar residues predominate over residues threonine 992 to serine 1017.

It belongs to the peptidase C48 family.

In terms of biological role, insertion mutation in SMT4 confers temperature and benomyl sensitivity; high copy suppressor of a temperature sensitive mutation in MIF2. This chain is Ubiquitin-like-specific protease 2 (ULP2), found in Saccharomyces cerevisiae (strain ATCC 204508 / S288c) (Baker's yeast).